Consider the following 284-residue polypeptide: uncharacterized protein (284 aa).

An N-terminal signal peptide occupies residues 1–24 (MLYSRESRTTVLFLALVTSLTVLC). Topologically, residues 25 to 84 (HSVDVTTVFTTSTITEITTVTAAPQPQNKAETALNTATNIIQTMQFLFNCAPFKWKGPLK) are cytoplasmic. Residues 85-104 (ITSCALNFIVLLLTAWGYLL) form a helical membrane-spanning segment. Over 105–284 (KYLQENKLNS…SVHMYSSSLL (180 aa)) the chain is Extracellular. An N-linked (GlcNAc...) asparagine glycan is attached at Asn270.

To yeast YNL019c.

The protein localises to the cell membrane. This is an uncharacterized protein from Saccharomyces cerevisiae (strain ATCC 204508 / S288c) (Baker's yeast).